The sequence spans 512 residues: Tyrosine-protein kinase Lyn (512 aa).

Residues 1–50 form a disordered region; the sequence is MGCIKSKRKDNLNDDGVDMKTQPVRNTDRTIYVRDPTSNKQQRPVPESQL. G2 carries N-myristoyl glycine lipidation. C3 carries S-palmitoyl cysteine lipidation. One can recognise an SH3 domain in the interval 63-123; that stretch reads EQGDIVVALY…PSNYVAKVNT (61 aa). The region spanning 129–226 is the SH2 domain; it reads WFFKDITRKD…GLCRRLEKAC (98 aa). Y193 carries the phosphotyrosine modification. S228 carries the phosphoserine modification. Residues 247–501 form the Protein kinase domain; the sequence is IKLVKKLGAG…YLQSVLDDFY (255 aa). ATP is bound by residues 253 to 261 and K275; that span reads LGAGQFGEV. Phosphotyrosine occurs at positions 306 and 316. The Proton acceptor role is filled by D367. Phosphotyrosine; by autocatalysis is present on Y397. Residues Y460 and Y473 each carry the phosphotyrosine modification. Y508 is modified (phosphotyrosine; by autocatalysis, CSK and MATK).

It belongs to the protein kinase superfamily. Tyr protein kinase family. SRC subfamily. As to quaternary structure, interacts with TEC. Interacts (via SH2 domain) with FLT3 (tyrosine phosphorylated). Interacts with LIME1 and with CD79A upon activation of the B-cell antigen receptor. Interacts with the B-cell receptor complex. Interacts with phosphorylated THEMIS2. Interacts with EPOR. Interacts with MS4A2/FCER1B. Interaction (via the SH2 and SH3 domains) with MUC1 is stimulated by IL7 and the subsequent phosphorylation increases the binding between MUC1 and CTNNB1/beta-catenin. Interacts with ADAM15. Interacts with NDFIP2 and more weakly with NDFIP1. Interacts with FASLG. Interacts with KIT. Interacts with HCLS1. Interacts with FCGR2B. Interacts with FCGR1A; the interaction may be indirect. Interacts with CD19, CD22, CD79A and CD79B. Interacts (via SH3 domain) with CBLC, PPP1R15A and PDE4A. Interacts with TGFB1I1. Interacts (via SH3 domain) with PIK3R1, the regulatory subunit of phosphatidylinositol 3-kinase; this interaction enhances phosphatidylinositol 3-kinase activity. Interacts with CSF2RB, the common subunit of the IL3, IL5 and CSF2 receptors. Interacts with PAG1; identified in a complex with PAG1 and STAT3. Interacts with ABL1. Interacts with PTPN6/SHP-1. Interacts (via SH3 domain) with SCIMP (via proline-rich region). This interaction facilitates the phosphorylation of SCIMP 'Tyr-96', which enhances binding of SCIMP to TLR4, and consequently the phosphorylation of TLR4 in response to stimulation by lipopolysaccharide in macrophages. Interacts with LPXN (via LD motif 3) and the interaction is induced upon B-cell antigen receptor (BCR) activation. Interacts (via SH3-domain) with ANKRD54 (via ankyrin repeat region) in an activation-independent status of LYN. Forms a multiprotein complex with ANKRD54 and HCLS1. Interacts (via SH2 and SH3 domains) with UNC119; leading to LYN activation. Interacts with CD36. Interacts with LYN. Interacts with SKAP1 and FYB1; this interaction promotes the phosphorylation of CLNK. Interacts with BCAR1/CAS and NEDD9/HEF1. Ubiquitinated. Ubiquitination is SH3-dependent. Post-translationally, autophosphorylated. Phosphorylated on tyrosine residues in response to KIT signaling. Phosphorylation at Tyr-397 is required for optimal activity. Phosphorylation at Tyr-508 inhibits kinase activity. Phosphorylated at Tyr-508 by CSK. Dephosphorylated by PTPRC/CD45. Becomes rapidly phosphorylated upon activation of the B-cell receptor and the immunoglobulin receptor FCGR1A. Phosphorylated in response to integrin ITGB1 in B-cells. Detected in spleen (at protein level). Expressed predominantly in B-lymphoid and myeloid cells.

It is found in the cell membrane. Its subcellular location is the nucleus. The protein localises to the cytoplasm. It localises to the perinuclear region. The protein resides in the golgi apparatus. It is found in the membrane. The catalysed reaction is L-tyrosyl-[protein] + ATP = O-phospho-L-tyrosyl-[protein] + ADP + H(+). Subject to autoinhibition, mediated by intramolecular interactions between the SH2 domain and the C-terminal phosphotyrosine. Phosphorylation at Tyr-397 is required for optimal activity. Phosphorylated by CSK at Tyr-508; phosphorylation at Tyr-508 inhibits kinase activity. Kinase activity is modulated by dephosphorylation by PTPRC/CD45. Its function is as follows. Non-receptor tyrosine-protein kinase that transmits signals from cell surface receptors and plays an important role in the regulation of innate and adaptive immune responses, hematopoiesis, responses to growth factors and cytokines, integrin signaling, but also responses to DNA damage and genotoxic agents. Functions primarily as negative regulator, but can also function as activator, depending on the context. Required for the initiation of the B-cell response, but also for its down-regulation and termination. Plays an important role in the regulation of B-cell differentiation, proliferation, survival and apoptosis, and is important for immune self-tolerance. Acts downstream of several immune receptors, including the B-cell receptor, CD79A, CD79B, CD5, CD19, CD22, FCER1, FCGR2, FCGR1A, TLR2 and TLR4. Plays a role in the inflammatory response to bacterial lipopolysaccharide. Mediates the responses to cytokines and growth factors in hematopoietic progenitors, platelets, erythrocytes, and in mature myeloid cells, such as dendritic cells, neutrophils and eosinophils. Acts downstream of EPOR, KIT, MPL, the chemokine receptor CXCR4, as well as the receptors for IL3, IL5 and CSF2. Plays an important role in integrin signaling. Regulates cell proliferation, survival, differentiation, migration, adhesion, degranulation, and cytokine release. Involved in the regulation of endothelial activation, neutrophil adhesion and transendothelial migration. Down-regulates signaling pathways by phosphorylation of immunoreceptor tyrosine-based inhibitory motifs (ITIM), that then serve as binding sites for phosphatases, such as PTPN6/SHP-1, PTPN11/SHP-2 and INPP5D/SHIP-1, that modulate signaling by dephosphorylation of kinases and their substrates. Phosphorylates LIME1 in response to CD22 activation. Phosphorylates BTK, CBL, CD5, CD19, CD72, CD79A, CD79B, CSF2RB, DOK1, HCLS1, LILRB3/PIR-B, MS4A2/FCER1B, SYK and TEC. Promotes phosphorylation of SIRPA, PTPN6/SHP-1, PTPN11/SHP-2 and INPP5D/SHIP-1. Required for rapid phosphorylation of FER in response to FCER1 activation. Mediates KIT phosphorylation. Acts as an effector of EPOR (erythropoietin receptor) in controlling KIT expression and may play a role in erythroid differentiation during the switch between proliferation and maturation. Depending on the context, activates or inhibits several signaling cascades. Regulates phosphatidylinositol 3-kinase activity and AKT1 activation. Regulates activation of the MAP kinase signaling cascade, including activation of MAP2K1/MEK1, MAPK1/ERK2, MAPK3/ERK1, MAPK8/JNK1 and MAPK9/JNK2. Mediates activation of STAT5A and/or STAT5B. Phosphorylates LPXN on 'Tyr-72'. Kinase activity facilitates TLR4-TLR6 heterodimerization and signal initiation. Phosphorylates SCIMP on 'Tyr-96'; this enhances binding of SCIMP to TLR4, promoting the phosphorylation of TLR4, and a selective cytokine response to lipopolysaccharide in macrophages. Phosphorylates CLNK. Phosphorylates BCAR1/CAS and NEDD9/HEF1. This chain is Tyrosine-protein kinase Lyn (Lyn), found in Rattus norvegicus (Rat).